The sequence spans 398 residues: Substance-K receptor (398 aa).

The Extracellular portion of the chain corresponds to 1–32 (MGTCDIVTEANISSGPESNTTGITAFSMPSWQ). Asn11 and Asn19 each carry an N-linked (GlcNAc...) asparagine glycan. Residues 33–56 (LALWATAYLALVLVAVTGNAIVIW) form a helical membrane-spanning segment. Topologically, residues 57-69 (IILAHRRMRTVTN) are cytoplasmic. Residues 70–90 (YFIVNLALADLCMAAFNAAFN) traverse the membrane as a helical segment. Topologically, residues 91 to 107 (FVYASHNIWYFGRAFCY) are extracellular. Cys106 and Cys181 are disulfide-bonded. Residues 108–129 (FQNLFPITAMFVSIYSMTAIAA) form a helical membrane-spanning segment. At 130-149 (DRYMAIVHPFQPRLSAPSTK) the chain is on the cytoplasmic side. The chain crosses the membrane as a helical span at residues 150–170 (AVIAGIWLVALALASPQCFYS). At 171 to 196 (TVTMDQGATKCVVAWPEDSGGKTLLL) the chain is on the extracellular side. Residues 197 to 218 (YHLVVIALIYFLPLAVMFVAYS) form a helical membrane-spanning segment. Residues 219 to 251 (VIGLTLWRRAVPGHQAHGANLRHLQAMKKFVKT) lie on the Cytoplasmic side of the membrane. A helical membrane pass occupies residues 252-272 (MVLVVLTFAICWLPYHLYFIL). Topologically, residues 273–290 (GSFQEDIYCHKFIQQVYL) are extracellular. Residues 291-310 (ALFWLAMSSTMYNPIIYCCL) traverse the membrane as a helical segment. Topologically, residues 311 to 398 (NHRFRSGFRL…LAPTKTHVEI (88 aa)) are cytoplasmic. Residue Cys324 is the site of S-palmitoyl cysteine attachment.

The protein belongs to the G-protein coupled receptor 1 family.

The protein localises to the cell membrane. Functionally, this is a receptor for the tachykinin neuropeptide substance K (neurokinin A). It is associated with G proteins that activate a phosphatidylinositol-calcium second messenger system. The rank order of affinity of this receptor to tachykinins is: substance K &gt; neuromedin-K &gt; substance P. This Homo sapiens (Human) protein is Substance-K receptor (TACR2).